Here is a 50-residue protein sequence, read N- to C-terminus: Temporin-SHb (50 aa).

A signal peptide spans 1–10; the sequence is FLGTINLSLC. Residues 11-35 constitute a propeptide that is removed on maturation; it reads EQERDADEEERRDEPDESDVEVEKR. The tract at residues 12 to 31 is disordered; sequence QERDADEEERRDEPDESDVE. Positions 14–30 are enriched in acidic residues; the sequence is RDADEEERRDEPDESDV. Position 48 is a leucine amide (Leu-48).

The protein belongs to the frog skin active peptide (FSAP) family. Temporin subfamily. As to expression, expressed by the skin glands.

The protein localises to the secreted. Its function is as follows. Amphipathic alpha-helical peptide with no antimicrobial activity. Does not display anti-leishmania activity. Does not show hemolytic activity (LC(50)&gt;116 uM). This is Temporin-SHb from Pelophylax saharicus (Sahara frog).